We begin with the raw amino-acid sequence, 250 residues long: Exotoxin type A (250 aa).

A signal peptide spans methionine 1–cysteine 30. A disulfide bridge links cysteine 117 with cysteine 128.

It belongs to the staphylococcal/streptococcal toxin family.

Its function is as follows. Causative agent of the symptoms associated with scarlet fever, have been associated with streptococcal toxic shock-like disease and may play a role in the early events of rheumatic fever. The sequence is that of Exotoxin type A (speA) from Streptococcus pyogenes.